The primary structure comprises 187 residues: Endoribonuclease YbeY (187 aa).

Zn(2+)-binding residues include H148, H152, and H158.

It belongs to the endoribonuclease YbeY family. It depends on Zn(2+) as a cofactor.

Its subcellular location is the cytoplasm. Functionally, single strand-specific metallo-endoribonuclease involved in late-stage 70S ribosome quality control and in maturation of the 3' terminus of the 16S rRNA. The protein is Endoribonuclease YbeY of Ralstonia nicotianae (strain ATCC BAA-1114 / GMI1000) (Ralstonia solanacearum).